The chain runs to 469 residues: Uronate isomerase (469 aa).

This sequence belongs to the metallo-dependent hydrolases superfamily. Uronate isomerase family.

The enzyme catalyses D-glucuronate = D-fructuronate. It carries out the reaction aldehydo-D-galacturonate = keto-D-tagaturonate. It functions in the pathway carbohydrate metabolism; pentose and glucuronate interconversion. The sequence is that of Uronate isomerase from Corynebacterium efficiens (strain DSM 44549 / YS-314 / AJ 12310 / JCM 11189 / NBRC 100395).